Reading from the N-terminus, the 382-residue chain is Succinyl-diaminopimelate desuccinylase (382 aa).

Residue His73 coordinates Zn(2+). The active site involves Asp75. Asp106 serves as a coordination point for Zn(2+). The active-site Proton acceptor is Glu140. Zn(2+) is bound by residues Glu141, Glu169, and His355.

Belongs to the peptidase M20A family. DapE subfamily. In terms of assembly, homodimer. It depends on Zn(2+) as a cofactor. Co(2+) serves as cofactor.

It catalyses the reaction N-succinyl-(2S,6S)-2,6-diaminopimelate + H2O = (2S,6S)-2,6-diaminopimelate + succinate. It participates in amino-acid biosynthesis; L-lysine biosynthesis via DAP pathway; LL-2,6-diaminopimelate from (S)-tetrahydrodipicolinate (succinylase route): step 3/3. Its function is as follows. Catalyzes the hydrolysis of N-succinyl-L,L-diaminopimelic acid (SDAP), forming succinate and LL-2,6-diaminopimelate (DAP), an intermediate involved in the bacterial biosynthesis of lysine and meso-diaminopimelic acid, an essential component of bacterial cell walls. This chain is Succinyl-diaminopimelate desuccinylase, found in Leptothrix cholodnii (strain ATCC 51168 / LMG 8142 / SP-6) (Leptothrix discophora (strain SP-6)).